The following is a 329-amino-acid chain: Glucosyl-3-phosphoglycerate synthase (329 aa).

Residues 55 to 59 (PALDE), Ser-86, Lys-119, and 139 to 141 (DSD) contribute to the UDP-alpha-D-glucose site. Asp-141 provides a ligand contact to Mn(2+). 189-192 (GRVT) serves as a coordination point for (2R)-3-phosphoglycerate. 234–237 (YGVE) contacts UDP-alpha-D-glucose. His-263 provides a ligand contact to Mn(2+). Asn-265 serves as a coordination point for (2R)-3-phosphoglycerate.

Belongs to the glycosyltransferase 2 family. Homodimer. The cofactor is Mg(2+). Requires Mn(2+) as cofactor.

The catalysed reaction is an NDP-alpha-D-glucose + (2R)-3-phosphoglycerate = (2R)-2-O-(alpha-D-glucopyranosyl)-3-phospho-glycerate + a ribonucleoside 5'-diphosphate + H(+). The enzyme catalyses (2R)-3-phosphoglycerate + UDP-alpha-D-glucose = (2R)-2-O-(alpha-D-glucopyranosyl)-3-phospho-glycerate + UDP + H(+). It carries out the reaction GDP-D-glucose + (2R)-3-phosphoglycerate = (2R)-2-O-(alpha-D-glucopyranosyl)-3-phospho-glycerate + GDP + H(+). Its function is as follows. Involved in the biosynthesis of 6-O-methylglucose lipopolysaccarides (MGLPs). Catalyzes the transfer of the glucose moiety from UDP-alpha-D-glucose (UDP-Glc) to the position 2 of 3-phospho-D-glycerate (3-PGA) to form glucosyl-3-phosphoglycerate (GPG). To a lesser extent can also use GDP-Glc but not UDP-Gal or UDP-GlcNAc as the sugar donor. In Mycolicibacterium paratuberculosis (strain ATCC BAA-968 / K-10) (Mycobacterium paratuberculosis), this protein is Glucosyl-3-phosphoglycerate synthase.